The chain runs to 550 residues: Chaperonin GroEL (550 aa).

ATP-binding positions include 30–33, Lys-51, 87–91, Gly-415, 478–480, and Asp-494; these read TLGP, DGTTT, and NAA.

It belongs to the chaperonin (HSP60) family. In terms of assembly, forms a cylinder of 14 subunits composed of two heptameric rings stacked back-to-back. Interacts with the co-chaperonin GroES.

Its subcellular location is the cytoplasm. The catalysed reaction is ATP + H2O + a folded polypeptide = ADP + phosphate + an unfolded polypeptide.. In terms of biological role, together with its co-chaperonin GroES, plays an essential role in assisting protein folding. The GroEL-GroES system forms a nano-cage that allows encapsulation of the non-native substrate proteins and provides a physical environment optimized to promote and accelerate protein folding. This chain is Chaperonin GroEL, found in Desulfosudis oleivorans (strain DSM 6200 / JCM 39069 / Hxd3) (Desulfococcus oleovorans).